The sequence spans 223 residues: Deoxyribose-phosphate aldolase (223 aa).

The active-site Proton donor/acceptor is the D91. K153 serves as the catalytic Schiff-base intermediate with acetaldehyde. The active-site Proton donor/acceptor is K182.

This sequence belongs to the DeoC/FbaB aldolase family. DeoC type 1 subfamily.

The protein localises to the cytoplasm. The enzyme catalyses 2-deoxy-D-ribose 5-phosphate = D-glyceraldehyde 3-phosphate + acetaldehyde. It participates in carbohydrate degradation; 2-deoxy-D-ribose 1-phosphate degradation; D-glyceraldehyde 3-phosphate and acetaldehyde from 2-deoxy-alpha-D-ribose 1-phosphate: step 2/2. Functionally, catalyzes a reversible aldol reaction between acetaldehyde and D-glyceraldehyde 3-phosphate to generate 2-deoxy-D-ribose 5-phosphate. The protein is Deoxyribose-phosphate aldolase of Yersinia pseudotuberculosis serotype O:1b (strain IP 31758).